We begin with the raw amino-acid sequence, 930 residues long: Translation initiation factor IF-2 (930 aa).

Residues 50–67 (FKPAAAPKVEAKPAAPKV) are compositionally biased toward low complexity. 2 disordered regions span residues 50–196 (FKPA…RIDF) and 260–346 (EVVP…HELP). Basic and acidic residues-rich tracts occupy residues 68–90 (SAEK…EAKP) and 110–125 (FKAE…AERR). The span at 129–141 (KGNNRDQQQNGNR) shows a compositional bias: low complexity. Composition is skewed to basic and acidic residues over residues 157–172 (RDNR…EQGQ) and 262–295 (VPEK…DGPR). The segment covering 309-318 (NQKNSNWNNN) has biased composition (low complexity). Residues 337 to 346 (VTERKFHELP) are compositionally biased toward basic and acidic residues. The tr-type G domain maps to 432-599 (ERPPVVTIMG…TVLLVAEIQE (168 aa)). The G1 stretch occupies residues 441 to 448 (GHVDHGKT). 441 to 448 (GHVDHGKT) serves as a coordination point for GTP. The interval 466 to 470 (GITQH) is G2. A G3 region spans residues 487-490 (DTPG). Residues 487 to 491 (DTPGH) and 541 to 544 (NKID) contribute to the GTP site. The G4 stretch occupies residues 541–544 (NKID). The interval 577 to 579 (SAK) is G5.

It belongs to the TRAFAC class translation factor GTPase superfamily. Classic translation factor GTPase family. IF-2 subfamily.

The protein resides in the cytoplasm. In terms of biological role, one of the essential components for the initiation of protein synthesis. Protects formylmethionyl-tRNA from spontaneous hydrolysis and promotes its binding to the 30S ribosomal subunits. Also involved in the hydrolysis of GTP during the formation of the 70S ribosomal complex. This Streptococcus pneumoniae serotype 19F (strain G54) protein is Translation initiation factor IF-2.